The sequence spans 524 residues: Inorganic phosphate transporter 1-1 (524 aa).

Topologically, residues 1-24 (MAEQQLGVLKALDVAKTQLYHFTA) are cytoplasmic. A helical transmembrane segment spans residues 25–45 (IVIAGMGFFTDAYDLFCVSLV). Residues 46 to 70 (TKLLGRIYYFNPESAKPGSLPPHVA) lie on the Extracellular side of the membrane. Residues 71-91 (AAVNGVALCGTLSGQLFFGWL) traverse the membrane as a helical segment. Residues 92–99 (GDKLGRKK) lie on the Cytoplasmic side of the membrane. A helical transmembrane segment spans residues 100-120 (VYGLTLVMMILCSVASGLSFG). The Extracellular portion of the chain corresponds to 121-131 (HEAKGVMTTLC). The helical transmembrane segment at 132 to 152 (FFRFWLGFGIGGDYPLSATIM) threads the bilayer. At 153–161 (SEYANKKTR) the chain is on the cytoplasmic side. A helical membrane pass occupies residues 162–182 (GAFIAAVFAMQGVGILAGGFV). At 183–211 (ALAVSSIFDKKFPAPTYAVNRALSTPPQV) the chain is on the extracellular side. The helical transmembrane segment at 212 to 232 (DYIWRIIVMFGALPAALTYYW) threads the bilayer. The Cytoplasmic portion of the chain corresponds to 233-292 (RMKMPETARYTALVAKNIKQATADMSKVLQTDIELEERVEDDVKDPKQNYGLFSKEFLRR). A helical membrane pass occupies residues 293 to 313 (HGLHLLGTTSTWFLLDIAFYS). The Extracellular portion of the chain corresponds to 314-348 (QNLFQKDIFSAIGWIPKAATMNATHEVFRIARAQT). Residues 349–369 (LIALCSTVPGYWFTVAFIDTI) form a helical membrane-spanning segment. The Cytoplasmic segment spans residues 370-371 (GR). Residues 372-392 (FKIQLNGFFMMTVFMFAIAFP) traverse the membrane as a helical segment. The Extracellular portion of the chain corresponds to 393–402 (YNHWIKPENR). Residues 403–423 (IGFVVMYSLTFFFANFGPNAT) form a helical membrane-spanning segment. At 424-441 (TFIVPAEIFPARLRSTCH) the chain is on the cytoplasmic side. Residues 442–462 (GISAAAGKAGAIVGAFGFLYA) form a helical membrane-spanning segment. Residues 463-484 (AQSQDKAKVDAGYPPGIGVKNS) are Extracellular-facing. A helical membrane pass occupies residues 485–505 (LIMLGVLNFIGMLFTFLVPEP). Topologically, residues 506 to 524 (KGKSLEELSGEAEVSHDEK) are cytoplasmic.

The protein belongs to the major facilitator superfamily. Phosphate:H(+) symporter (TC 2.A.1.9) family. As to quaternary structure, interacts with NLA. In terms of processing, ubiquitinated by NLA. Ubiquitination of PHT1-1 leads to its degradation by the proteasome. As to expression, mostly expressed in roots, especially in trichoblasts and in emerging secondary roots and root hairs, but not in root tips. Also present in hydathodes, axillary buds and peripheral endosperm of germinating seeds.

It is found in the cell membrane. Inhibited by protonophores (e.g. 2,4-dinitrophenol and carbonylcyanide m-chlorophenylhydrazone), the plasma membrane H(+)-ATPase inhibitor diethylstilbestorol, and the phosphate analog arsenate. In terms of biological role, high-affinity transporter for external inorganic phosphate. Acts as a H(+):phosphate symporter in both low- and high-Pi conditions. Confers sensitivity to arsenate. The sequence is that of Inorganic phosphate transporter 1-1 (PHT1-1) from Arabidopsis thaliana (Mouse-ear cress).